Reading from the N-terminus, the 137-residue chain is Large ribosomal subunit protein uL16 (137 aa).

A compositionally biased stretch (basic residues) spans 1–14; it reads MLQPNRRKFRKEHK. Positions 1–22 are disordered; the sequence is MLQPNRRKFRKEHKGRNEGLAT.

The protein belongs to the universal ribosomal protein uL16 family. In terms of assembly, part of the 50S ribosomal subunit.

In terms of biological role, binds 23S rRNA and is also seen to make contacts with the A and possibly P site tRNAs. This chain is Large ribosomal subunit protein uL16, found in Dechloromonas aromatica (strain RCB).